The sequence spans 284 residues: Isopentenyl-diphosphate Delta-isomerase II, chloroplastic (284 aa).

The N-terminal 45 residues, 1–45, are a transit peptide targeting the chloroplast; the sequence is MSASSLFNLPLIRLRSLALSSSFSSFRFAHRPLSSISPRKLPNFR. The residue at position 46 (Ala46) is an N-acetylalanine. Lys88 contacts substrate. Positions 92 and 104 each coordinate Mg(2+). One can recognise a Nudix hydrolase domain in the interval 102–254; the sequence is LLHRAFSVFL…GLKLSPWFRL (153 aa). Residues Arg123 and Lys127 each contribute to the substrate site. The active site involves Cys139. Ser140 lines the substrate pocket. A Nudix box motif is present at residues 140–170; it reads SHPLYRESELIQDNALGVRNAAQRKLLDELG. The Mg(2+) site is built by Glu199 and Glu201. Glu201 is a catalytic residue.

The protein belongs to the IPP isomerase type 1 family. It depends on Mg(2+) as a cofactor.

It is found in the plastid. Its subcellular location is the chloroplast. It carries out the reaction isopentenyl diphosphate = dimethylallyl diphosphate. It functions in the pathway isoprenoid biosynthesis; dimethylallyl diphosphate biosynthesis; dimethylallyl diphosphate from isopentenyl diphosphate: step 1/1. It participates in porphyrin-containing compound metabolism; chlorophyll biosynthesis. Catalyzes the 1,3-allylic rearrangement of the homoallylic substrate isopentenyl (IPP) to its highly electrophilic allylic isomer, dimethylallyl diphosphate (DMAPP). The sequence is that of Isopentenyl-diphosphate Delta-isomerase II, chloroplastic (IPP2) from Arabidopsis thaliana (Mouse-ear cress).